A 483-amino-acid chain; its full sequence is Regulatory protein ViaA (483 aa).

It belongs to the ViaA family. In terms of assembly, homodimer. Interacts with RavA.

It localises to the cytoplasm. Functionally, component of the RavA-ViaA chaperone complex, which may act on the membrane to optimize the function of some of the respiratory chains. ViaA stimulates the ATPase activity of RavA. The chain is Regulatory protein ViaA from Shigella dysenteriae serotype 1 (strain Sd197).